A 1186-amino-acid chain; its full sequence is Atrophin-1 (1186 aa).

3 disordered regions span residues 1-604, 618-763, and 781-858; these read MKTR…PTVT, ASSP…ARFN, and VPLE…HRPP. A Nuclear localization signal motif is present at residues 16 to 32; that stretch reads RKKEAPGPREELRSRGR. Positions 17–29 are enriched in basic and acidic residues; it reads KKEAPGPREELRS. Ser-34 carries the phosphoserine modification. Over residues 45–63 the composition is skewed to basic and acidic residues; sequence GKAEKSRQTAKKARVEEAS. Phosphoserine is present on residues Ser-77, Ser-79, Ser-100, Ser-102, and Ser-106. Residues 107-127 show a composition bias toward basic and acidic residues; the sequence is LDGRSLNDDGSSDPRDIDQDN. The segment covering 128–151 has biased composition (polar residues); it reads RSTSPSIYSPGSVENDSDSSSGLS. Over residues 157–173 the composition is skewed to pro residues; sequence PYHPPPLFPPSPQPPDS. Composition is skewed to low complexity over residues 258 to 270, 349 to 365, and 375 to 396; these read PISVSSSGASGAP, PTLAPSPHSLPPASSSA, and SSSSSSSAAASSSSSSSSSSAS. The segment covering 416 to 437 has biased composition (polar residues); the sequence is SLSVSNQPPKYTQPSLPSQAVW. Low complexity predominate over residues 484-503; it reads QQQQQQQQQQQQQQQHHGNS. The involved in binding BAIAP2 stretch occupies residues 513 to 563; that stretch reads HPLEGGSSHHAHPYAMSPSLGSLRPYPPGPAHLPPPHSQVSYSQAGPNGPP. Residues 537-549 show a composition bias toward pro residues; sequence PYPPGPAHLPPPH. Composition is skewed to low complexity over residues 565–582 and 618–628; these read SSSSNSSSSTSQGSYPCS and ASSPAGYKTAS. Ser-628 carries the post-translational modification Phosphoserine. The residue at position 637 (Lys-637) is an N6-acetyllysine. Thr-649 is subject to Phosphothreonine. Ser-657 is modified (phosphoserine). The residue at position 665 (Thr-665) is a Phosphothreonine. Pro residues-rich tracts occupy residues 689-714 and 735-748; these read GPGPLPPAGPSGLPSLPPPPAAPASG and SPVPPARSPSPPPK. Ser-735 is subject to Phosphoserine; by MAPK8. A phosphoserine mark is found at Ser-742 and Ser-744. Positions 791–835 are enriched in basic and acidic residues; sequence KRADLVEKVRREAEQRAREEKEREREREREKEREREKERELERSV. The segment at 875-890 is required for interaction with FAT1; the sequence is DTPALRTLSEYARPHV. Ser-892 is subject to Phosphoserine. The Nuclear export signal motif lies at 1029-1037; it reads ALGNDPLAR. Arg-1111 carries the asymmetric dimethylarginine modification. A Glycyl lysine isopeptide (Lys-Gly) (interchain with G-Cter in SUMO2) cross-link involves residue Lys-1179.

In terms of assembly, interacts with NR2E1; the interaction represses the transcriptional activity of NR2E1. Interacts with BAIAP2, WWP1, WWP2, WWP3 and RERE. Interacts (via its N-terminus) with MTG8; the interaction enhances transcriptional repression of MTG8. Interacts with FAT1 (via a C-terminal domain). Interacts with PQBP1. Post-translationally, phosphorylated in vitro by MAPK8/JNK1 on Ser-735.

It is found in the nucleus. The protein resides in the cytoplasm. The protein localises to the perinuclear region. It localises to the cell junction. Transcriptional corepressor. Corepressor of MTG8 transcriptional repression. Recruits NR2E1 to repress transcription. Has some intrinsic repression activity. Promotes vascular smooth cell (VSMC) migration and orientation. The sequence is that of Atrophin-1 (ATN1) from Pan troglodytes (Chimpanzee).